The sequence spans 400 residues: 1-deoxy-D-xylulose 5-phosphate reductoisomerase (400 aa).

NADPH-binding residues include threonine 17, glycine 18, serine 19, isoleucine 20, and asparagine 131. Residue lysine 132 coordinates 1-deoxy-D-xylulose 5-phosphate. Glutamate 133 serves as a coordination point for NADPH. Residue aspartate 157 coordinates Mn(2+). Residues serine 158, glutamate 159, serine 188, and histidine 211 each coordinate 1-deoxy-D-xylulose 5-phosphate. Glutamate 159 contacts Mn(2+). Glycine 217 is an NADPH binding site. The 1-deoxy-D-xylulose 5-phosphate site is built by serine 224, asparagine 229, lysine 230, and glutamate 233. A Mn(2+)-binding site is contributed by glutamate 233.

This sequence belongs to the DXR family. Requires Mg(2+) as cofactor. Mn(2+) serves as cofactor.

It catalyses the reaction 2-C-methyl-D-erythritol 4-phosphate + NADP(+) = 1-deoxy-D-xylulose 5-phosphate + NADPH + H(+). It participates in isoprenoid biosynthesis; isopentenyl diphosphate biosynthesis via DXP pathway; isopentenyl diphosphate from 1-deoxy-D-xylulose 5-phosphate: step 1/6. Catalyzes the NADPH-dependent rearrangement and reduction of 1-deoxy-D-xylulose-5-phosphate (DXP) to 2-C-methyl-D-erythritol 4-phosphate (MEP). This chain is 1-deoxy-D-xylulose 5-phosphate reductoisomerase, found in Pseudomonas putida (strain ATCC 700007 / DSM 6899 / JCM 31910 / BCRC 17059 / LMG 24140 / F1).